We begin with the raw amino-acid sequence, 550 residues long: Phosphatidylinositol 4-kinase gamma 2 (550 aa).

Ubiquitin-like domains are found at residues 34–111 and 112–190; these read SVLV…YDPL and LVTV…VEDT. The tract at residues 228–247 is disordered; the sequence is VDGLNKGSPPVRSAEGTGGT. Residues 234–532 enclose the PI3K/PI4K catalytic domain; it reads GSPPVRSAEG…SVLPASSEAT (299 aa). Residues 240–246 form a G-loop region; it reads SAEGTGG. Residues 241-247, lysine 263, and 359-362 each bind ATP; these read AEGTGGT and QMFM. Residues 392–400 are catalytic loop; sequence ANADRHAGN. Residues 415–441 are activation loop; sequence PIDHGYCLPENFEDCTFEWLYWPQAKL. ATP is bound at residue aspartate 417.

Belongs to the PI3/PI4-kinase family. Type II PI4K subfamily.

The protein localises to the membrane. It catalyses the reaction a 1,2-diacyl-sn-glycero-3-phospho-(1D-myo-inositol) + ATP = a 1,2-diacyl-sn-glycero-3-phospho-(1D-myo-inositol 4-phosphate) + ADP + H(+). Functionally, the phosphorylation of phosphatidylinositol (PI) to PI4P is the first committed step in the generation of phosphatidylinositol 4,5-bisphosphate (PIP2), a precursor of the second messenger inositol 1,4,5-trisphosphate (InsP3). This Arabidopsis thaliana (Mouse-ear cress) protein is Phosphatidylinositol 4-kinase gamma 2 (PI4KG2).